The following is a 333-amino-acid chain: Homeobox protein Hox-D13 (333 aa).

Residues 1–24 form a disordered region; it reads MDGLRTDGGAAGAAPASSSSSSSV. Over residues 12-24 the composition is skewed to low complexity; that stretch reads GAAPASSSSSSSV. Positions 266-325 form a DNA-binding region, homeobox; sequence GRKKRVPYTKLQLKELENEYAINKFINKDKRRRISAATNLSERQVTIWFQNRRVKDKKIV.

It belongs to the Abd-B homeobox family.

It localises to the nucleus. In terms of biological role, sequence-specific transcription factor that binds gene promoters and activates their transcription. Part of a developmental regulatory system that provides cells with specific positional identities on the anterior-posterior axis. This Carollia perspicillata (Seba's short-tailed bat) protein is Homeobox protein Hox-D13 (HOXD13).